We begin with the raw amino-acid sequence, 207 residues long: LexA repressor (207 aa).

Positions 28-48 (RAEIARELGFRSANAAEEHLK) form a DNA-binding region, H-T-H motif. Catalysis depends on for autocatalytic cleavage activity residues serine 124 and lysine 161.

The protein belongs to the peptidase S24 family. In terms of assembly, homodimer.

It catalyses the reaction Hydrolysis of Ala-|-Gly bond in repressor LexA.. Represses a number of genes involved in the response to DNA damage (SOS response), including recA and lexA. In the presence of single-stranded DNA, RecA interacts with LexA causing an autocatalytic cleavage which disrupts the DNA-binding part of LexA, leading to derepression of the SOS regulon and eventually DNA repair. The chain is LexA repressor from Vibrio vulnificus (strain CMCP6).